Consider the following 716-residue polypeptide: Serine/threonine-protein kinase CBK1 (716 aa).

The span at 22 to 54 shows a compositional bias: low complexity; sequence EQQQHQQQLHYKQQQHIQQQQQHQQNQQNQQQQ. Disordered stretches follow at residues 22-78, 128-154, and 176-223; these read EQQQ…LPQM, MQELNSSPMTHPHSFQQNFQTPTKNDD, and PVTF…NAQK. Polar residues-rich tracts occupy residues 62–78, 130–150, and 180–195; these read FSTFLQNNGSNSDLPQM, ELNSSPMTHPHSFQQNFQTPT, and TKLNNNSNADLSSPTE. Positions 196 to 212 are enriched in low complexity; sequence SSFLKSNLNLPNSNIPP. Residues 315-634 enclose the Protein kinase domain; it reads FNTVKVIGKG…ADELKSHPFF (320 aa). Residues 321 to 329 and K344 each bind ATP; that span reads IGKGAFGEV. The active-site Proton acceptor is D438. The region spanning 635–714 is the AGC-kinase C-terminal domain; the sequence is RGVDWDTIRK…SRFDYLTRKN (80 aa).

It belongs to the protein kinase superfamily. STE Ser/Thr protein kinase family. COT1 subfamily.

The catalysed reaction is L-seryl-[protein] + ATP = O-phospho-L-seryl-[protein] + ADP + H(+). It catalyses the reaction L-threonyl-[protein] + ATP = O-phospho-L-threonyl-[protein] + ADP + H(+). Protein kinase that seems to play a role in the regulation of cell morphogenesis and proliferation. This is Serine/threonine-protein kinase CBK1 (CBK1) from Debaryomyces hansenii (strain ATCC 36239 / CBS 767 / BCRC 21394 / JCM 1990 / NBRC 0083 / IGC 2968) (Yeast).